A 68-amino-acid chain; its full sequence is U-poneritoxin(01)-Om4a (68 aa).

The signal sequence occupies residues Met-1 to Ala-25. Residues Glu-26–Ala-39 constitute a propeptide that is removed on maturation.

The protein belongs to the formicidae venom precursor-01 superfamily. Homo- or heterodimer with PLP7 (AC A0A348G6I9); disulfide-linked. Post-translationally, truncated sequences of this peptide have also been found in the venom. It is possible they have been cleaved in the venom. Expressed by the venom gland.

It localises to the secreted. This homodimer composed of two cationic amphipathic alpha-helical peptides has antimicrobial activities against E.coli (MIC=3.1 uM), S.aureus (MIC=3.1 uM), and S.cerevisiae (MIC=3.1 uM). It also shows histamine-releasing activity (66.4% at 10 uM) and a weak hemolytic activity (10.5% at 50 uM). In Odontomachus monticola (Trap-jaw ant), this protein is U-poneritoxin(01)-Om4a.